Here is a 933-residue protein sequence, read N- to C-terminus: Melanoma-associated antigen E1 (933 aa).

Disordered regions lie at residues 1 to 113 (MSLV…VSAG), 149 to 236 (GASI…GINL), 256 to 282 (SDIS…VQST), and 360 to 393 (TSGL…EDEN). Basic residues predominate over residues 8 to 23 (SRRRRGGRANGRKNSG). 4 stretches are compositionally biased toward polar residues: residues 64–97 (GGSS…QLPT), 149–166 (GASI…NVQP), 173–184 (GTSVPPTFSEES), and 219–236 (APST…GINL). MAGE domains lie at 467–666 (MEQN…YNEA) and 721–912 (LESK…YREA). An interaction with DTNA region spans residues 719–933 (SRLESKSRKL…RRPLVVRNLR (215 aa)).

Interacts with DTNA. Interacts with TRIM28.

The protein resides in the cytoplasm. It localises to the perinuclear region. Its subcellular location is the nucleus. The protein localises to the cell membrane. Functionally, may enhance ubiquitin ligase activity of RING-type zinc finger-containing E3 ubiquitin-protein ligases. Proposed to act through recruitment and/or stabilization of the Ubl-conjugating enzyme (E2) at the E3:substrate complex. This Rattus norvegicus (Rat) protein is Melanoma-associated antigen E1 (Magee1).